The sequence spans 479 residues: Aspartyl/glutamyl-tRNA(Asn/Gln) amidotransferase subunit B (479 aa).

Belongs to the GatB/GatE family. GatB subfamily. As to quaternary structure, heterotrimer of A, B and C subunits.

It catalyses the reaction L-glutamyl-tRNA(Gln) + L-glutamine + ATP + H2O = L-glutaminyl-tRNA(Gln) + L-glutamate + ADP + phosphate + H(+). The enzyme catalyses L-aspartyl-tRNA(Asn) + L-glutamine + ATP + H2O = L-asparaginyl-tRNA(Asn) + L-glutamate + ADP + phosphate + 2 H(+). Allows the formation of correctly charged Asn-tRNA(Asn) or Gln-tRNA(Gln) through the transamidation of misacylated Asp-tRNA(Asn) or Glu-tRNA(Gln) in organisms which lack either or both of asparaginyl-tRNA or glutaminyl-tRNA synthetases. The reaction takes place in the presence of glutamine and ATP through an activated phospho-Asp-tRNA(Asn) or phospho-Glu-tRNA(Gln). This Geobacter sulfurreducens (strain ATCC 51573 / DSM 12127 / PCA) protein is Aspartyl/glutamyl-tRNA(Asn/Gln) amidotransferase subunit B.